The following is a 341-amino-acid chain: Trans-3-hydroxy-L-proline dehydratase (341 aa).

Ser-90 (proton acceptor) is an active-site residue. Substrate contacts are provided by residues 91–92, Asp-252, and 257–258; these read GS and GT.

This sequence belongs to the proline racemase family.

The catalysed reaction is trans-3-hydroxy-L-proline = 1-pyrroline-2-carboxylate + H2O. Its function is as follows. Catalyzes the dehydration of trans-3-hydroxy-L-proline (t3LHyp) to Delta(1)-pyrroline-2-carboxylate (Pyr2C). May be involved in a degradation pathway of t3LHyp, which would allow L.aggregata to grow on t3LHyp as a sole carbon source. Displays neither proline racemase activity nor 4-hydroxyproline 2-epimerase activity. This is Trans-3-hydroxy-L-proline dehydratase from Roseibium aggregatum (strain ATCC 25650 / DSM 13394 / JCM 20685 / NBRC 16684 / NCIMB 2208 / IAM 12614 / B1) (Stappia aggregata).